Consider the following 673-residue polypeptide: Fatty acyl-CoA synthetase B (673 aa).

The signal sequence occupies residues 1-18 (MINNWLAVGLLVVSGILA). The N-linked (GlcNAc...) asparagine glycan is linked to Asn267.

It belongs to the ATP-dependent AMP-binding enzyme family.

Its subcellular location is the endoplasmic reticulum. It catalyses the reaction a long-chain fatty acid + ATP + CoA = a long-chain fatty acyl-CoA + AMP + diphosphate. Functionally, long chain fatty acid acyl-CoA synthetases catalyze the formation of a thiester bond between a free fatty acid and coenzyme A during fatty acid metabolic process. This is Fatty acyl-CoA synthetase B (fcsB) from Dictyostelium discoideum (Social amoeba).